The chain runs to 166 residues: Deglycase PfpI (166 aa).

A PfpI endopeptidase domain is found at 1-166 (MKILFLSANE…WMREFVKLLK (166 aa)). C100 acts as the Nucleophile in catalysis. Residue H101 is part of the active site.

Belongs to the peptidase C56 family. In terms of assembly, homooligomer. Exists in two functional species: the predominant form is a homohexamer that comprises about 90% of the total activity, and the minor form is trimeric.

Its subcellular location is the cytoplasm. It catalyses the reaction N(omega)-(1-hydroxy-2-oxopropyl)-L-arginyl-[protein] + H2O = lactate + L-arginyl-[protein] + H(+). It carries out the reaction N(6)-(1-hydroxy-2-oxopropyl)-L-lysyl-[protein] + H2O = lactate + L-lysyl-[protein] + H(+). The catalysed reaction is S-(1-hydroxy-2-oxopropyl)-L-cysteinyl-[protein] + H2O = lactate + L-cysteinyl-[protein] + H(+). The enzyme catalyses N(omega)-(1-hydroxy-2-oxoethyl)-L-arginyl-[protein] + H2O = L-arginyl-[protein] + glycolate + H(+). It catalyses the reaction N(6)-(1-hydroxy-2-oxoethyl)-L-lysyl-[protein] + H2O = glycolate + L-lysyl-[protein] + H(+). It carries out the reaction S-(1-hydroxy-2-oxoethyl)-L-cysteinyl-[protein] + H2O = glycolate + L-cysteinyl-[protein] + H(+). Its function is as follows. Deglycase that catalyzes the deglycation of the Maillard adducts formed between amino groups of proteins and reactive carbonyl groups of glyoxals. Thus, functions as a protein deglycase that repairs methylglyoxal- and glyoxal-glycated proteins, and releases repaired proteins and lactate or glycolate, respectively. Deglycates cysteine, arginine and lysine residues in proteins, and thus reactivates these proteins by reversing glycation by glyoxals. Thus, was shown to afford full protection against glycation of thioredoxin by glyoxal. Acts on early glycation intermediates (hemithioacetals and aminocarbinols), preventing the formation of advanced glycation endproducts (AGE) that cause irreversible damage. Prevents acrylamide formation in asparagine/glyoxal and asparagine/sugar mixtures, likely by degrading asparagine/glyoxal Maillard adducts formed at high temperatures. Also displays proteolytic activity. Cleaves at the carboxyl side of both basic and hydrophobic residues in the P1 position, indicating trypsin- and chymotrypsin-like specificities. This Pyrococcus furiosus (strain ATCC 43587 / DSM 3638 / JCM 8422 / Vc1) protein is Deglycase PfpI.